Here is a 562-residue protein sequence, read N- to C-terminus: MLTKTNDSRLIDRSSGFDQRTGIYHSLRPSLSLPPIDQPLSAAEFALSLLLKSSPPATAGKNIEALTYLVNSSSGDNLTYGELLRRVRSLAVSLRERFPSLASRNVAFILSPSSLDIPVLYLALMSIGVVVSPANPIGSESEVSHQVEVSEPVIAFATSQTVKKLQSSSLPLGTVLMDSTEFLSWLNRSDSSSVNPFQVQVNQSDPAAILFSSGTTGRVKGVLLTHRNLIASTAVSHQRTLQDPVNYDRVGLFSLPLFHVFGFMMMIRAISLGETLVLLGRFELEAMFKAVEKYKVTGMPVSPPLIVALVKSELTKKYDLRSLRSLGCGGAPLGKDIAERFKQKFPDVDIVQGYGLTESSGPAASTFGPEEMVKYGSVGRISENMEAKIVDPSTGESLPPGKTGELWLRGPVIMKGYVGNEKASAETVDKEGWLKTGDLCYFDSEDFLYIVDRLKELIKYKAYQVPPVELEQILHSNPDVIDAAVVPFPDEDAGEIPMAFIVRKPGSNLNEAQIIDFVAKQVTPYKKVRRVAFINAIPKNPAGKILRRELTKIAVDGNASKL.

S212, S213, G214, T215, T216, and K220 together coordinate ATP. R281 serves as a coordination point for CoA. The interval 283-352 is SBD1; sequence ELEAMFKAVE…QKFPDVDIVQ (70 aa). ATP-binding residues include Q352, G353, T357, D438, and R453. Residues 353–417 are SBD2; it reads GYGLTESSGP…LRGPVIMKGY (65 aa). 2 residues coordinate CoA: K461 and A462. K544 contributes to the ATP binding site. The Microbody targeting signal signature appears at 560 to 562; it reads SKL.

Belongs to the ATP-dependent AMP-binding enzyme family. Requires Mg(2+) as cofactor. Expressed at low level in leaves.

The protein localises to the peroxisome. The catalysed reaction is (9S,13S,15Z)-12-oxophyto-10,15-dienoate + ATP + CoA = (10Z,15Z)-12-oxophytodienoyl-CoA + AMP + diphosphate. The enzyme catalyses hexadecanoate + ATP + CoA = hexadecanoyl-CoA + AMP + diphosphate. It catalyses the reaction (9Z)-octadecenoate + ATP + CoA = (9Z)-octadecenoyl-CoA + AMP + diphosphate. It carries out the reaction octadecanoate + ATP + CoA = octadecanoyl-CoA + AMP + diphosphate. The catalysed reaction is tetradecanoate + ATP + CoA = tetradecanoyl-CoA + AMP + diphosphate. The enzyme catalyses dodecanoate + ATP + CoA = dodecanoyl-CoA + AMP + diphosphate. It catalyses the reaction decanoate + ATP + CoA = decanoyl-CoA + AMP + diphosphate. It carries out the reaction octanoate + ATP + CoA = octanoyl-CoA + AMP + diphosphate. The catalysed reaction is (9Z,12Z)-octadecadienoate + ATP + CoA = (9Z,12Z)-octadecadienoyl-CoA + AMP + diphosphate. The enzyme catalyses (9Z,12Z,15Z)-octadecatrienoate + ATP + CoA = (9Z,12Z,15Z)-octadecatrienoyl-CoA + AMP + diphosphate. It catalyses the reaction nonanoate + ATP + CoA = nonanoyl-CoA + AMP + diphosphate. Functionally, contributes to jasmonic acid biosynthesis by initiating the beta-oxidative chain shortening of its precursors. Converts 12-oxo-phytodienoic acid (OPDA) into OPDA-CoA. Follows a two-step reaction mechanism, wherein the carboxylate substrate first undergoes adenylation by ATP, followed by a thioesterification in the presence of CoA to yield the final CoA thioester. The protein is 4-coumarate--CoA ligase-like 9 of Arabidopsis thaliana (Mouse-ear cress).